Consider the following 376-residue polypeptide: Chaperone protein DnaJ (376 aa).

A J domain is found at 5 to 70 (DYYEVLGVGR…DKKAAYDQFG (66 aa)). The CR-type zinc-finger motif lies at 132–210 (GLTKELRIPT…CHGDGRVEKS (79 aa)). 8 residues coordinate Zn(2+): Cys-145, Cys-148, Cys-162, Cys-165, Cys-184, Cys-187, Cys-198, and Cys-201. CXXCXGXG motif repeat units lie at residues 145-152 (CDLCDGSG), 162-169 (CTTCHGQG), 184-191 (CPTCHGRG), and 198-205 (CTKCHGDG).

Belongs to the DnaJ family. In terms of assembly, homodimer. Requires Zn(2+) as cofactor.

Its subcellular location is the cytoplasm. In terms of biological role, participates actively in the response to hyperosmotic and heat shock by preventing the aggregation of stress-denatured proteins and by disaggregating proteins, also in an autonomous, DnaK-independent fashion. Unfolded proteins bind initially to DnaJ; upon interaction with the DnaJ-bound protein, DnaK hydrolyzes its bound ATP, resulting in the formation of a stable complex. GrpE releases ADP from DnaK; ATP binding to DnaK triggers the release of the substrate protein, thus completing the reaction cycle. Several rounds of ATP-dependent interactions between DnaJ, DnaK and GrpE are required for fully efficient folding. Also involved, together with DnaK and GrpE, in the DNA replication of plasmids through activation of initiation proteins. In Shewanella putrefaciens (strain CN-32 / ATCC BAA-453), this protein is Chaperone protein DnaJ.